We begin with the raw amino-acid sequence, 1607 residues long: Phosphatidylinositol 3-kinase piki-1 (1607 aa).

In terms of domain architecture, UIM spans 2-21 (SDDEELQLAIEISKKTFKDE). 3 disordered regions span residues 54–91 (EANS…HSQS), 105–128 (STSQ…KFPP), and 142–182 (PPPP…SFAS). The span at 58–69 (PGPSSYSGSLAT) shows a compositional bias: polar residues. Positions 158-169 (PPVPIHPTPPVS) are enriched in pro residues. A PI3K-RBD domain is found at 362–453 (ASTVKVVVYK…GDDVKLDLGV (92 aa)). Residues 598 to 766 (KMDFLQIMLN…KIWDTEIYFP (169 aa)) enclose the C2 PI3K-type domain. One can recognise a PIK helical domain in the interval 776–953 (PQDFATLDIE…AIRCQNLQQK (178 aa)). In terms of domain architecture, PI3K/PI4K catalytic spans 1029-1303 (RIEECSVFNS…MIQNSLGSAF (275 aa)). The segment at 1035-1041 (VFNSNAK) is G-loop. The tract at residues 1168-1176 (GIGDRHNDN) is catalytic loop. Positions 1187 to 1213 (HIDFGKYMGDWQMAAGFRRDRVPFVFT) are activation loop. The 115-residue stretch at 1344-1458 (GRISRVTVLK…TFFHSILRDN (115 aa)) folds into the PX domain. The C2 domain occupies 1472 to 1601 (SQCQIYLKIE…KNCRTLEGWF (130 aa)).

The protein belongs to the PI3/PI4-kinase family.

Its subcellular location is the cell projection. It localises to the phagocytic cup. It is found in the cytoplasmic vesicle. The protein localises to the phagosome membrane. The protein resides in the cytoplasm. It catalyses the reaction a 1,2-diacyl-sn-glycero-3-phospho-(1D-myo-inositol) + ATP = a 1,2-diacyl-sn-glycero-3-phospho-(1D-myo-inositol-3-phosphate) + ADP + H(+). In terms of biological role, phosphatidylinositol 3-kinase involved in clearance of apoptotic cell corpses by phagosomes. Phagosome maturation requires two sequential and non-overlapping pulses of phosphatidylinositol-3-phosphate (PI3P) on the vesicle surface which mediates recruitment of sortins snx-1 and lst-4 and small GTPases rab-5, rab-2 and rab-7. The first pulse is initiated by piki-1, then maintained by vps-34 which also produces the second pulse. Unlike vps-34, not involved in the formation of PI3P in early endosomes. The polypeptide is Phosphatidylinositol 3-kinase piki-1 (Caenorhabditis elegans).